The sequence spans 337 residues: MRPPGFWHAPPDALGWRARALAPLGALYAAATARRVARPPAHRPGIPVICVGNINAGGTGKTPTVIALQMILAARGIAAHVVSRGYGGRLEGPVAVDPRRHDAAEVGDEPLLLAAFGPTWVARDRAAGARAAEGAGAQAILLDDGFQNPTLAKDLSLVVVDAQRGFGNGRVIPAGPLREPVARGLARADLLLTIGPPAAQARFDALWGPATVTLPHLRGALTPLQTGMRWEGLRAVAFAGIGHPQKFFDTLQDQGVILCATHPLDDHQPLDARLITRLLADAKAQGAQLVTTEKDAVRLPAELRGQVLSLPVRLALADDTALTAALDTLFPNATRRL.

55–62 contacts ATP; sequence NAGGTGKT.

The protein belongs to the LpxK family.

It catalyses the reaction a lipid A disaccharide + ATP = a lipid IVA + ADP + H(+). Its pathway is glycolipid biosynthesis; lipid IV(A) biosynthesis; lipid IV(A) from (3R)-3-hydroxytetradecanoyl-[acyl-carrier-protein] and UDP-N-acetyl-alpha-D-glucosamine: step 6/6. Its function is as follows. Transfers the gamma-phosphate of ATP to the 4'-position of a tetraacyldisaccharide 1-phosphate intermediate (termed DS-1-P) to form tetraacyldisaccharide 1,4'-bis-phosphate (lipid IVA). The chain is Tetraacyldisaccharide 4'-kinase from Dinoroseobacter shibae (strain DSM 16493 / NCIMB 14021 / DFL 12).